We begin with the raw amino-acid sequence, 490 residues long: Metalloreductase STEAP2 (490 aa).

NADP(+) contacts are provided by residues 38 to 41, 60 to 61, 93 to 100, Asn118, and Ala151; these read SGDF, SR, and IHREHYTS. FAD contacts are provided by Trp152 and Asp160. A helical membrane pass occupies residues 208–228; that stretch reads LFTLWRGPVVVAISLATFFFL. Tyr229 provides a ligand contact to Fe(3+). Residues 259–279 traverse the membrane as a helical segment; it reads LPIVAITLLSLVYLAGLLAAA. The Ferric oxidoreductase domain maps to 259 to 407; it reads LPIVAITLLS…LGYVALLIST (149 aa). FAD-binding residues include Gln281 and Arg302. 4 helical membrane-spanning segments follow: residues 305–325, 359–379, 393–413, and 432–452; these read LGLLSFFFAMVHVAYSLCLPM, MYISFGIMSLGLLSLLAVTSI, FIQSTLGYVALLISTFHVLIY, and FVLALVLPSIVILGKIILFLP. His316 is a heme b binding site. Residue Tyr319 participates in Fe(3+) binding. The FAD site is built by Ser378 and Gln395. A heme b-binding site is contributed by His409. Residue Ser483 is modified to Phosphoserine.

It belongs to the STEAP family. It depends on FAD as a cofactor. Heme b serves as cofactor. As to expression, expressed at high levels in prostate and at significantly lower levels in heart, brain, kidney, pancreas, and ovary.

It is found in the endosome membrane. The protein localises to the cell membrane. The catalysed reaction is 2 Fe(2+) + NADP(+) + H(+) = 2 Fe(3+) + NADPH. It catalyses the reaction 2 Cu(+) + NADP(+) + H(+) = 2 Cu(2+) + NADPH. Its function is as follows. Integral membrane protein that functions as a NADPH-dependent ferric-chelate reductase, using NADPH from one side of the membrane to reduce a Fe(3+) chelate that is bound on the other side of the membrane. Mediates sequential transmembrane electron transfer from NADPH to FAD and onto heme, and finally to the Fe(3+) chelate. Can also reduce Cu(2+) to Cu(1+). In Homo sapiens (Human), this protein is Metalloreductase STEAP2 (STEAP2).